We begin with the raw amino-acid sequence, 496 residues long: Galactose-1-phosphate uridylyltransferase (496 aa).

It belongs to the galactose-1-phosphate uridylyltransferase type 2 family.

It localises to the cytoplasm. The catalysed reaction is alpha-D-galactose 1-phosphate + UDP-alpha-D-glucose = alpha-D-glucose 1-phosphate + UDP-alpha-D-galactose. It functions in the pathway carbohydrate metabolism; galactose metabolism. This is Galactose-1-phosphate uridylyltransferase from Staphylococcus saprophyticus subsp. saprophyticus (strain ATCC 15305 / DSM 20229 / NCIMB 8711 / NCTC 7292 / S-41).